A 262-amino-acid chain; its full sequence is Hemin import ATP-binding protein HmuV (262 aa).

The 247-residue stretch at 1–247 (MRNLTLQRGR…ERIKQIFAFD (247 aa)) folds into the ABC transporter domain. 31–38 (GPNGTGKS) is an ATP binding site.

Belongs to the ABC transporter superfamily. Heme (hemin) importer (TC 3.A.1.14.5) family. In terms of assembly, the complex is composed of two ATP-binding proteins (HmuV), two transmembrane proteins (HmuU) and a solute-binding protein (HmuT).

It localises to the cell inner membrane. Part of the ABC transporter complex HmuTUV involved in hemin import. Responsible for energy coupling to the transport system. The sequence is that of Hemin import ATP-binding protein HmuV from Plesiomonas shigelloides (Aeromonas shigelloides).